Here is a 435-residue protein sequence, read N- to C-terminus: Trigger factor (435 aa).

Residues 163–248 (GDTVTIDFDG…IHEIKTKELP (86 aa)) form the PPIase FKBP-type domain.

This sequence belongs to the FKBP-type PPIase family. Tig subfamily.

It localises to the cytoplasm. It carries out the reaction [protein]-peptidylproline (omega=180) = [protein]-peptidylproline (omega=0). Involved in protein export. Acts as a chaperone by maintaining the newly synthesized protein in an open conformation. Functions as a peptidyl-prolyl cis-trans isomerase. The chain is Trigger factor from Pediococcus pentosaceus (strain ATCC 25745 / CCUG 21536 / LMG 10740 / 183-1w).